A 334-amino-acid polypeptide reads, in one-letter code: Transcription initiation factor IIB (334 aa).

The segment at 34–65 adopts a TFIIB-type zinc-finger fold; sequence TESVCPECKSRQLVHDYERAELVCQNCGLVID. The Zn(2+) site is built by C38, C41, C57, and C60. Tandem repeats lie at residues 151–234 and 245–326.

Belongs to the TFIIB family.

Its function is as follows. Stabilizes TBP binding to an archaeal box-A promoter. Also responsible for recruiting RNA polymerase II to the pre-initiation complex (DNA-TBP-TFIIB). This chain is Transcription initiation factor IIB, found in Methanosphaerula palustris (strain ATCC BAA-1556 / DSM 19958 / E1-9c).